A 177-amino-acid polypeptide reads, in one-letter code: NADH-quinone oxidoreductase subunit B (177 aa).

Residues Cys-56, Cys-57, Cys-121, and Cys-151 each coordinate [4Fe-4S] cluster.

This sequence belongs to the complex I 20 kDa subunit family. NDH-1 is composed of 14 different subunits. Subunits NuoB, C, D, E, F, and G constitute the peripheral sector of the complex. The cofactor is [4Fe-4S] cluster.

Its subcellular location is the cell inner membrane. It carries out the reaction a quinone + NADH + 5 H(+)(in) = a quinol + NAD(+) + 4 H(+)(out). Its function is as follows. NDH-1 shuttles electrons from NADH, via FMN and iron-sulfur (Fe-S) centers, to quinones in the respiratory chain. Couples the redox reaction to proton translocation (for every two electrons transferred, four hydrogen ions are translocated across the cytoplasmic membrane), and thus conserves the redox energy in a proton gradient. This Dinoroseobacter shibae (strain DSM 16493 / NCIMB 14021 / DFL 12) protein is NADH-quinone oxidoreductase subunit B.